A 214-amino-acid polypeptide reads, in one-letter code: Large ribosomal subunit protein uL29m (214 aa).

This sequence belongs to the universal ribosomal protein uL29 family. As to quaternary structure, component of the mitochondrial large ribosomal subunit. Mature mitochondrial ribosomes consist of a small (37S) and a large (54S) subunit. The 37S subunit contains at least 33 different proteins and 1 molecule of RNA (15S). The 54S subunit contains at least 45 different proteins and 1 molecule of RNA (21S).

The protein localises to the mitochondrion. The sequence is that of Large ribosomal subunit protein uL29m (mrpl4) from Aspergillus terreus (strain NIH 2624 / FGSC A1156).